Here is a 594-residue protein sequence, read N- to C-terminus: DNA polymerase epsilon subunit B (594 aa).

This sequence belongs to the DNA polymerase epsilon subunit B family. Heterotetramer. Consists of four subunits: pol2, dpb2, dpb3 and dpb4. Interacts with dpb3.

It localises to the nucleus. Its function is as follows. As accessory component of the DNA polymerase epsilon (DNA polymerase II) participates in chromosomal DNA replication. The sequence is that of DNA polymerase epsilon subunit B (dpb2) from Schizosaccharomyces pombe (strain 972 / ATCC 24843) (Fission yeast).